The primary structure comprises 496 residues: Probable chlorophyll(ide) b reductase NYC1, chloroplastic (496 aa).

The N-terminal 43 residues, Met1–Arg43, are a transit peptide targeting the chloroplast. The next 2 membrane-spanning stretches (helical) occupy residues Tyr105–Gly125 and Leu132–Val152. Ile166 to Val190 provides a ligand contact to NAD(+). The stretch at Ser195–Leu224 forms a coiled coil. Tyr330 serves as the catalytic Proton acceptor. A helical transmembrane segment spans residues Trp470–Pro490.

This sequence belongs to the short-chain dehydrogenases/reductases (SDR) family. In terms of assembly, interacts with NOL to form a complex that acts as a chlorophyll b reductase. Interacts with HCAR, RCCR, SGR1 and the LHCII complex. Part of a SGR1-CCE-LHCII complex, which acts in chlorophyll breakdown.

It localises to the plastid. Its subcellular location is the chloroplast thylakoid membrane. The catalysed reaction is 7(1)-hydroxychlorophyllide a + NAD(+) = chlorophyllide b + NADH + H(+). The enzyme catalyses 7(1)-hydroxychlorophyllide a + NADP(+) = chlorophyllide b + NADPH + H(+). Its function is as follows. Involved in chlorophyll b degradation. Belongs to the chlorophyll catabolic enzymes (CCEs). The chain is Probable chlorophyll(ide) b reductase NYC1, chloroplastic (NYC1) from Arabidopsis thaliana (Mouse-ear cress).